The chain runs to 328 residues: 4-hydroxy-2-oxoglutarate aldolase, mitochondrial (328 aa).

A mitochondrion-targeting transit peptide spans 1 to 26 (MFGRTLFPARVIALGSGLFRTPLRTL). Position 76–77 (76–77 (SN)) interacts with substrate. The active-site Schiff-base intermediate with substrate is Lys195. The substrate site is built by Ser197 and Gly221.

The protein belongs to the DapA family. Homotetramer.

It localises to the mitochondrion. It carries out the reaction (4S)-4-hydroxy-2-oxoglutarate = glyoxylate + pyruvate. It catalyses the reaction (4R)-4-hydroxy-2-oxoglutarate = glyoxylate + pyruvate. With respect to regulation, inhibited by divalent cations. In terms of biological role, catalyzes the final step in the metabolic pathway of hydroxyproline. This chain is 4-hydroxy-2-oxoglutarate aldolase, mitochondrial (hoga1), found in Xenopus tropicalis (Western clawed frog).